The primary structure comprises 118 residues: Nucleoid-associated protein CTN_1899 (118 aa).

Belongs to the YbaB/EbfC family. In terms of assembly, homodimer.

The protein resides in the cytoplasm. It localises to the nucleoid. In terms of biological role, binds to DNA and alters its conformation. May be involved in regulation of gene expression, nucleoid organization and DNA protection. This Thermotoga neapolitana (strain ATCC 49049 / DSM 4359 / NBRC 107923 / NS-E) protein is Nucleoid-associated protein CTN_1899.